The sequence spans 137 residues: Protein apnoia (137 aa).

3 helical membrane passes run 7–27 (IVFALVCLFLACDLVLGQQQA), 55–75 (LVPGAFVVGVITTLLAALTVV), and 76–96 (SIKGLGVGVILLVLAIGQMLS).

As to quaternary structure, interacts with crb.

It localises to the apical cell membrane. Transmembrane protein that plays a key role in trachea development by regulating crb localization and maintenance at the apical cell membrane. Required for anisotropic apical surface expansion important for tracheal tube elongation and lumen stability at larval stages. The chain is Protein apnoia from Drosophila melanogaster (Fruit fly).